A 100-amino-acid polypeptide reads, in one-letter code: Large ribosomal subunit protein uL23 (100 aa).

The protein belongs to the universal ribosomal protein uL23 family. Part of the 50S ribosomal subunit. Contacts protein L29, and trigger factor when it is bound to the ribosome.

One of the early assembly proteins it binds 23S rRNA. One of the proteins that surrounds the polypeptide exit tunnel on the outside of the ribosome. Forms the main docking site for trigger factor binding to the ribosome. In Synechococcus sp. (strain CC9605), this protein is Large ribosomal subunit protein uL23.